Reading from the N-terminus, the 414-residue chain is DNA primase large subunit PriL (414 aa).

[4Fe-4S] cluster contacts are provided by Cys251, Cys352, Cys370, and Cys376.

This sequence belongs to the eukaryotic-type primase large subunit family. In terms of assembly, heterodimer of a small subunit (PriS) and a large subunit (PriL). [4Fe-4S] cluster serves as cofactor.

Functionally, regulatory subunit of DNA primase, an RNA polymerase that catalyzes the synthesis of short RNA molecules used as primers for DNA polymerase during DNA replication. Stabilizes and modulates the activity of the small subunit, increasing the rate of DNA synthesis, and conferring RNA synthesis capability. The DNA polymerase activity may enable DNA primase to also catalyze primer extension after primer synthesis. May also play a role in DNA repair. The polypeptide is DNA primase large subunit PriL (Methanocaldococcus jannaschii (strain ATCC 43067 / DSM 2661 / JAL-1 / JCM 10045 / NBRC 100440) (Methanococcus jannaschii)).